We begin with the raw amino-acid sequence, 386 residues long: 2-isopropylmalate synthase (386 aa).

The Pyruvate carboxyltransferase domain occupies 12–265; the sequence is VRIFDTTLRD…EVNIKTYKLY (254 aa). 4 residues coordinate a divalent metal cation: Asp21, His203, His205, and Asn239.

The protein belongs to the alpha-IPM synthase/homocitrate synthase family. Homodimer. A divalent metal cation serves as cofactor.

The catalysed reaction is 3-methyl-2-oxobutanoate + acetyl-CoA + H2O = (2S)-2-isopropylmalate + CoA + H(+). It functions in the pathway amino-acid biosynthesis; L-leucine biosynthesis; L-leucine from 3-methyl-2-oxobutanoate: step 1/4. In terms of biological role, catalyzes the condensation of the acetyl group of acetyl-CoA with 3-methyl-2-oxobutanoate (2-oxoisovalerate) to form 3-carboxy-3-hydroxy-4-methylpentanoate (2-isopropylmalate). Carries out the first step of the leucine biosynthesis pathway. The protein is 2-isopropylmalate synthase (leuA) of Sulfurisphaera tokodaii (strain DSM 16993 / JCM 10545 / NBRC 100140 / 7) (Sulfolobus tokodaii).